Here is a 268-residue protein sequence, read N- to C-terminus: MALVVKGKVNINEFIDLTKMEKILPSMFTPVKSVMCSKVDKIMVHENESLSEVNLLKGVKLIDSGYVCLAGLVVTGEWNLPDNCRGGVSVCLVDKRMERADEATLGSYYTAAAKKRFQFKVVPNYAITTQDAMKNVWQVLVNIRNVKMSAGFCPLSLEFVSVCIVYRNNIKLGLREKITSVRDGGPMELTEEVVDEFMEDVPMSIRLAKFRSRTGKKSDVRKGKISSSDRSAPNKNYRNVKDFGGMSFKKNNLIDDDSETTVAESDSF.

Residues 218 to 246 (SDVRKGKISSSDRSAPNKNYRNVKDFGGM) are disordered. Residues 225 to 237 (ISSSDRSAPNKNY) show a composition bias toward polar residues.

It belongs to the tobamovirus movement protein family. Binds to host RBCS at the plasmodesmata; this interaction seems required for viral systemic movement. In resistant plants, interacts with host MBP2C at host microtubules; this interaction prevents virus cell to cell movement. In resistant plants, interacts with host resistance (R) protein (e.g. tomato ToMV resistance protein TM-2(2), AC Q71BG9) at the host plasma membrane; this interaction triggers host defense responses leading to programmed cell death.

The protein localises to the host cytoplasm. It is found in the host cytoskeleton. Its subcellular location is the host cell junction. The protein resides in the host plasmodesma. Its function is as follows. Transports viral genome to neighboring plant cells directly through plasmosdesmata, without any budding. The movement protein allows efficient cell to cell propagation, by bypassing the host cell wall barrier. Forms a ribonucleoprotein complex with viral RNA. Binds microtubules and modulates microtubule stability. Can bind double-stranded DNA. Triggers host hypersensitive defense reaction in incompatible plants harboring resistance (R) proteins. The chain is Movement protein (MP) from Nicotiana tabacum (Common tobacco).